The sequence spans 671 residues: Transcriptional regulator Kaiso (671 aa).

Residues 1-103 (MESRKLISAT…RADLLDELIK (103 aa)) form an interaction with NCOR1 region. Residues 1–136 (MESRKLISAT…SGTEQDGTAE (136 aa)) form a self-association region. One can recognise a BTB domain in the interval 32–94 (CDVTVIVEDR…IYSSKVVRVR (63 aa)). The span at 127–144 (SGTEQDGTAETLPSSSSD) shows a compositional bias: polar residues. Residues 127 to 161 (SGTEQDGTAETLPSSSSDKSLDMEKSKDEAQDNGA) are disordered. The span at 145–156 (KSLDMEKSKDEA) shows a compositional bias: basic and acidic residues. Residues lysine 151 and lysine 153 each participate in a glycyl lysine isopeptide (Lys-Gly) (interchain with G-Cter in SUMO2) cross-link. Threonine 251 bears the Phosphothreonine mark. The tract at residues 298–571 (LPNHMSSSVN…FMSSHIKSVH (274 aa)) is interaction with CBFA2T3. A disordered region spans residues 332-365 (IIDDDDDIISSSPDSAVSNTSLVPQADNSKSTTL). Positions 347 to 365 (AVSNTSLVPQADNSKSTTL) are enriched in polar residues. Glycyl lysine isopeptide (Lys-Gly) (interchain with G-Cter in SUMO2) cross-links involve residues lysine 388, lysine 405, lysine 412, and lysine 447. Positions 451–461 (DGGEAKLDNEL) are enriched in basic and acidic residues. The disordered stretch occupies residues 451 to 474 (DGGEAKLDNELPKTSGSEPPNKRM). The tract at residues 452-671 (GGEAKLDNEL…EFEFIIPESY (220 aa)) is interaction with CTNND1. Glycyl lysine isopeptide (Lys-Gly) (interchain with G-Cter in SUMO2) cross-links involve residues lysine 463, lysine 472, and lysine 477. The Nuclear localization signal motif lies at 469-478 (PPNKRMKVKH). C2H2-type zinc fingers lie at residues 492–514 (YICI…FNIH), 520–542 (YQCR…EIHH), and 548–571 (YQCL…KSVH). Positions 512–637 (NIHSWEKKYQ…TSTPPQNKST (126 aa)) are required for DNA-binding. Residues lysine 537, lysine 568, lysine 580, lysine 609, and lysine 616 each participate in a glycyl lysine isopeptide (Lys-Gly) (interchain with G-Cter in SUMO2) cross-link.

As to quaternary structure, interacts with NCOR1. Self-associates. Interacts with CTNND1, and this interaction inhibits binding to both methylated and non-methylated DNA. Interacts with CTNND2. Interacts with KPNA2/RCH1, which may mediate nuclear import of this protein. Interacts with CBFA2T3. As to expression, expressed in brain, heart, kidney, liver, lung, neuromuscular junctions, skeletal muscle, spleen and testis.

It is found in the nucleus. Functionally, transcriptional regulator with bimodal DNA-binding specificity. Binds to methylated CpG dinucleotides in the consensus sequence 5'-CGCG-3' and also binds to the non-methylated consensus sequence 5'-CTGCNA-3' also known as the consensus kaiso binding site (KBS). May recruit the N-CoR repressor complex to promote histone deacetylation and the formation of repressive chromatin structures in target gene promoters. Contributes to the repression of target genes of the Wnt signaling pathway. May also activate transcription of a subset of target genes by the recruitment of CTNND2. Represses expression of MMP7 in conjunction with transcriptional corepressors CBFA2T3, CBFA2T2 and RUNX1T1. This chain is Transcriptional regulator Kaiso (Zbtb33), found in Mus musculus (Mouse).